Reading from the N-terminus, the 39-residue chain is Photosystem II reaction center protein L (39 aa).

Residues 18-38 (SLYLGLLLIAVLGILFSSYFF) traverse the membrane as a helical segment.

The protein belongs to the PsbL family. PSII is composed of 1 copy each of membrane proteins PsbA, PsbB, PsbC, PsbD, PsbE, PsbF, PsbH, PsbI, PsbJ, PsbK, PsbL, PsbM, PsbT, PsbX, PsbY, PsbZ, Psb30/Ycf12, peripheral proteins PsbO, CyanoQ (PsbQ), PsbU, PsbV and a large number of cofactors. It forms dimeric complexes.

Its subcellular location is the cellular thylakoid membrane. In terms of biological role, one of the components of the core complex of photosystem II (PSII). PSII is a light-driven water:plastoquinone oxidoreductase that uses light energy to abstract electrons from H(2)O, generating O(2) and a proton gradient subsequently used for ATP formation. It consists of a core antenna complex that captures photons, and an electron transfer chain that converts photonic excitation into a charge separation. This subunit is found at the monomer-monomer interface and is required for correct PSII assembly and/or dimerization. In Picosynechococcus sp. (strain ATCC 27264 / PCC 7002 / PR-6) (Agmenellum quadruplicatum), this protein is Photosystem II reaction center protein L.